A 112-amino-acid polypeptide reads, in one-letter code: MVKGRQGERVRLYVRGTILGYKRSKSNQYPNTSLVQVEGVNTTEEVSWYKGKRMAYIYKAKTKKNGSHYRCIWGKVTRPHGNSGVVRAKFTSNLPPKSMGSRVRVFMYPSNI.

The protein belongs to the eukaryotic ribosomal protein eL33 family.

The sequence is that of Large ribosomal subunit protein eL33w (RPL35AA) from Arabidopsis thaliana (Mouse-ear cress).